A 427-amino-acid polypeptide reads, in one-letter code: Glutamyl-tRNA(Gln) amidotransferase subunit D (427 aa).

An Asparaginase/glutaminase domain is found at 74–407 (ERVYIIGAGG…EVVRKMFQRN (334 aa)). Residues Thr-84, Thr-160, Asp-161, and Lys-240 contribute to the active site.

It belongs to the asparaginase 1 family. GatD subfamily. In terms of assembly, heterodimer of GatD and GatE.

It catalyses the reaction L-glutamyl-tRNA(Gln) + L-glutamine + ATP + H2O = L-glutaminyl-tRNA(Gln) + L-glutamate + ADP + phosphate + H(+). Its function is as follows. Allows the formation of correctly charged Gln-tRNA(Gln) through the transamidation of misacylated Glu-tRNA(Gln) in organisms which lack glutaminyl-tRNA synthetase. The reaction takes place in the presence of glutamine and ATP through an activated gamma-phospho-Glu-tRNA(Gln). The GatDE system is specific for glutamate and does not act on aspartate. This Aeropyrum pernix (strain ATCC 700893 / DSM 11879 / JCM 9820 / NBRC 100138 / K1) protein is Glutamyl-tRNA(Gln) amidotransferase subunit D.